We begin with the raw amino-acid sequence, 325 residues long: DNA-directed RNA polymerase subunit alpha (325 aa).

Residues 1–231 (MQTSLLKPKI…DQLSVFAALE (231 aa)) are alpha N-terminal domain (alpha-NTD). The tract at residues 246–325 (IDPILLRPVD…ENWPPAGLDK (80 aa)) is alpha C-terminal domain (alpha-CTD).

This sequence belongs to the RNA polymerase alpha chain family. Homodimer. The RNAP catalytic core consists of 2 alpha, 1 beta, 1 beta' and 1 omega subunit. When a sigma factor is associated with the core the holoenzyme is formed, which can initiate transcription.

It catalyses the reaction RNA(n) + a ribonucleoside 5'-triphosphate = RNA(n+1) + diphosphate. Its function is as follows. DNA-dependent RNA polymerase catalyzes the transcription of DNA into RNA using the four ribonucleoside triphosphates as substrates. The sequence is that of DNA-directed RNA polymerase subunit alpha from Burkholderia orbicola (strain MC0-3).